Here is a 422-residue protein sequence, read N- to C-terminus: MDKIVIEGGVPLRGSVDVSGAKNAALPVIAAALLAEGEHEVRNVPDLADVRTLGKLLGHMGCEVARGEGDRRTVRLRVPAAVAPEAPYELVKTMRASVLVLGPLLARLGRARVSLPGGCAIGARPIDQHLKALTALGAEIRLEHGYVNASVPRGRLRGTVFTFDAQTVTGTENVMMAAALADGETVLRNCAREPEVKDLGDALVAMGALVEGAGTDEIWIEGVPSLRPLSHAVIPDRIEAGTFLVAGALPGNDVTVRGCVAAHQEALVEKLRAVGAEVTKVEGGLRVVGDGRPRPVDVRTAPHPGFPTDMQAQLMVLLCLADGTSRITETVFENRFMHVQELIRLGAHVEVDGRVAMVKGVPELSGAPVMASDLRASAALVLAGLAASGTTEVLRVYHLDRGYERIEEKLAPLGARIRRVRG.

Position 22–23 (lysine 22–asparagine 23) interacts with phosphoenolpyruvate. A UDP-N-acetyl-alpha-D-glucosamine-binding site is contributed by arginine 95. Cysteine 119 acts as the Proton donor in catalysis. Cysteine 119 is subject to 2-(S-cysteinyl)pyruvic acid O-phosphothioketal. Residues arginine 124–glutamine 128, aspartate 309, and valine 331 contribute to the UDP-N-acetyl-alpha-D-glucosamine site.

The protein belongs to the EPSP synthase family. MurA subfamily.

The protein localises to the cytoplasm. It carries out the reaction phosphoenolpyruvate + UDP-N-acetyl-alpha-D-glucosamine = UDP-N-acetyl-3-O-(1-carboxyvinyl)-alpha-D-glucosamine + phosphate. It participates in cell wall biogenesis; peptidoglycan biosynthesis. Cell wall formation. Adds enolpyruvyl to UDP-N-acetylglucosamine. The chain is UDP-N-acetylglucosamine 1-carboxyvinyltransferase from Anaeromyxobacter dehalogenans (strain 2CP-1 / ATCC BAA-258).